Consider the following 1089-residue polypeptide: Pentatricopeptide repeat-containing protein MRL1, chloroplastic (1089 aa).

A chloroplast-targeting transit peptide spans 1-72 (MEVTSTTFIS…SIRSPRLVVR (72 aa)). PPR repeat units follow at residues 466-500 (TMST…GMTA), 501-535 (DCKL…GVEA), 536-570 (NLHT…NVKP), 571-605 (DRVV…THPI), 608-642 (DHIS…GIRG), 643-677 (TPEV…DVTP), 678-712 (DEVF…GIRL), 713-747 (GTIS…KLRP), 748-782 (TIST…GLKP), and 783-817 (NTIT…GVSP).

Belongs to the PPR family. P subfamily. Expressed in stems, leaves and sepals.

Its subcellular location is the plastid. The protein localises to the chloroplast. In terms of biological role, regulator of the large subunit (LS) of RuBisCO. Involved either in the processing or in the stabilization of the processed transcript, probably by acting as a barrier to the 5'&gt;3' degradation. The chain is Pentatricopeptide repeat-containing protein MRL1, chloroplastic (MRL1) from Arabidopsis thaliana (Mouse-ear cress).